A 422-amino-acid chain; its full sequence is MHIHKIQAREILDSRGNPTIEADVILTTGIIGRASVPSGASTGSREACELRDNDPKRYAGKGVQKAVKHVNNEINQALQGLSVEDQENLDRILCQLDNTENKSHLGANAILATSLACARARALSLNQPLYITLNQGDMMTMPVPMMNILNGGAHADNNVDIQEFMIMPIGAPDFPVALQMGTEIFHVLKSVLKKQGLNTAVGDEGGFAPNIQSNRQALDLLSEAIEKAGFRLGEDIVFALDVAASELFNEGFYHMYSENQKFDSHQLIEYYANLISSYPIVSIEDGLDEKDWSGWKQLTTHLGNKVQLVGDDLFVTNPKILREGIAQGIANAILIKVNQIGTLSETRQAIKLAYDNGYRCVMSHRSGETEDTFIADLAVASGCGQIKTGSLCRTDRTAKYNQLLRINELASLPYAGKNILKR.

Gln-162 is a binding site for (2R)-2-phosphoglycerate. Glu-204 (proton donor) is an active-site residue. Residues Asp-241, Glu-284, and Asp-311 each coordinate Mg(2+). (2R)-2-phosphoglycerate-binding residues include Lys-336, Arg-365, Ser-366, and Lys-387. Lys-336 acts as the Proton acceptor in catalysis.

The protein belongs to the enolase family. In terms of assembly, component of the RNA degradosome, a multiprotein complex involved in RNA processing and mRNA degradation. It depends on Mg(2+) as a cofactor.

It is found in the cytoplasm. The protein localises to the secreted. It localises to the cell surface. It catalyses the reaction (2R)-2-phosphoglycerate = phosphoenolpyruvate + H2O. Its pathway is carbohydrate degradation; glycolysis; pyruvate from D-glyceraldehyde 3-phosphate: step 4/5. Functionally, catalyzes the reversible conversion of 2-phosphoglycerate (2-PG) into phosphoenolpyruvate (PEP). It is essential for the degradation of carbohydrates via glycolysis. This chain is Enolase, found in Legionella pneumophila (strain Paris).